Reading from the N-terminus, the 458-residue chain is tRNA modification GTPase MnmE (458 aa).

(6S)-5-formyl-5,6,7,8-tetrahydrofolate-binding residues include Arg-22, Glu-86, and Arg-125. Positions 221 to 379 (GIRTVILGRP…LEQTITEMFF (159 aa)) constitute a TrmE-type G domain. Asn-231 provides a ligand contact to K(+). Residues 231-236 (NAGKSS), 250-256 (TEIAGTT), and 275-278 (DTAG) each bind GTP. Ser-235 contributes to the Mg(2+) binding site. K(+) is bound by residues Thr-250, Ile-252, and Thr-255. Thr-256 is a Mg(2+) binding site. Position 458 (Lys-458) interacts with (6S)-5-formyl-5,6,7,8-tetrahydrofolate.

Belongs to the TRAFAC class TrmE-Era-EngA-EngB-Septin-like GTPase superfamily. TrmE GTPase family. In terms of assembly, homodimer. Heterotetramer of two MnmE and two MnmG subunits. K(+) serves as cofactor.

The protein localises to the cytoplasm. Exhibits a very high intrinsic GTPase hydrolysis rate. Involved in the addition of a carboxymethylaminomethyl (cmnm) group at the wobble position (U34) of certain tRNAs, forming tRNA-cmnm(5)s(2)U34. The sequence is that of tRNA modification GTPase MnmE from Lachnoclostridium phytofermentans (strain ATCC 700394 / DSM 18823 / ISDg) (Clostridium phytofermentans).